Here is a 639-residue protein sequence, read N- to C-terminus: UvrABC system protein C (639 aa).

Residues 31 to 109 enclose the GIY-YIG domain; sequence EQAGVYRMYD…IKKYQPKYNI (79 aa). The 36-residue stretch at 218 to 253 folds into the UVR domain; the sequence is SAVIEQLVARMELASNELHFELAAKYRDQIVTLRKV.

This sequence belongs to the UvrC family. As to quaternary structure, interacts with UvrB in an incision complex.

It is found in the cytoplasm. In terms of biological role, the UvrABC repair system catalyzes the recognition and processing of DNA lesions. UvrC both incises the 5' and 3' sides of the lesion. The N-terminal half is responsible for the 3' incision and the C-terminal half is responsible for the 5' incision. This Colwellia psychrerythraea (strain 34H / ATCC BAA-681) (Vibrio psychroerythus) protein is UvrABC system protein C.